Consider the following 95-residue polypeptide: MAWARDEGGAAVLELLVQPRASRTRAVGEHDGRLKIQLAAPPVDGAANAALVEFLAVALGVRRADVALLRGETGRRKTVRVAGITAAAAVAALAS.

This sequence belongs to the UPF0235 family.

This Anaeromyxobacter sp. (strain K) protein is UPF0235 protein AnaeK_1146.